A 389-amino-acid polypeptide reads, in one-letter code: Cuticlin-3 (389 aa).

The signal sequence occupies residues 1–19; sequence MARYSLGLGLCLLVASVSA. Residues 20–354 lie on the Extracellular side of the membrane; the sequence is IPVDNNVEGE…ELCISSFHIS (335 aa). One can recognise a ZP domain in the interval 33–278; that stretch reads ECGPTSITVN…PTCSEPQGFG (246 aa). A glycan (N-linked (GlcNAc...) asparagine) is linked at N284. The helical transmembrane segment at 355 to 375 threads the bilayer; that stretch reads VVTVFLGLTVFVAIFITYMIV. The Cytoplasmic segment spans residues 376–389; that stretch reads SRMMVPSDKMQSAC.

It localises to the cell membrane. Its function is as follows. Plays a role in alae formation in L1 larvae. This chain is Cuticlin-3, found in Caenorhabditis elegans.